Here is a 205-residue protein sequence, read N- to C-terminus: Protein PAXX (205 aa).

The region spanning 39–81 (FNLYVTDAAELWSTCFSPDSLARLKARFGLSGAEDIHSRFRAA) is the PISA domain. At Thr147 the chain carries Phosphothreonine. Over residues 147–159 (TITSPKKNTQPAG) the composition is skewed to polar residues. A disordered region spans residues 147-205 (TITSPKKNTQPAGTQFLPELDHQRGSSGPGVRRRCPGESLINPGFKSKKPAAGVDFDET). Ser150 carries the phosphoserine modification. The segment at 172 to 205 (SSGPGVRRRCPGESLINPGFKSKKPAAGVDFDET) is mediates interaction with XRCC5/Ku80 and XRCC6/Ku70 and association with the non-homologous end joining core complex. Positions 191-205 (FKSKKPAAGVDFDET) match the XLM motif.

The protein belongs to the XRCC4-XLF family. PAXX subfamily. In terms of assembly, homodimer. Interacts with the DNA-bound XRCC5/Ku80 and XRCC6/Ku70 heterodimer (Ku complex); the interaction is direct. Associated component of the non-homologous end joining (NHEJ) complex, composed of the core proteins PRKDC, LIG4, XRCC4, XRCC6/Ku70, XRCC5/Ku86 and NHEJ1/XLF. Interacts with POLL (DNA polymerase lambda); promoting POLL recruitment to double-strand breaks (DSBs) and stimulation of the end-filling activity of POLL. In terms of processing, phosphorylation may inhibit interaction with the DNA-bound XRCC5/Ku80 and XRCC6/Ku70 heterodimer (Ku complex).

It is found in the nucleus. Its subcellular location is the chromosome. Functionally, non-essential DNA repair protein involved in DNA non-homologous end joining (NHEJ); participates in double-strand break (DSB) repair and V(D)J recombination. May act as a scaffold required for accumulation of the Ku heterodimer, composed of XRCC5/Ku80 and XRCC6/Ku70, at double-strand break sites and promote the assembly and/or stability of the NHEJ machinery. Involved in NHEJ by promoting the ligation of blunt-ended DNA ends. Together with NHEJ1/XLF, collaborates with DNA polymerase lambda (POLL) to promote joining of non-cohesive DNA ends. Constitutes a non-essential component of classical NHEJ: has a complementary but distinct function with NHEJ1/XLF in DNA repair. The protein is Protein PAXX of Mus musculus (Mouse).